The primary structure comprises 243 residues: UPF0502 protein H16_B1091 (243 aa).

A disordered region spans residues 1-23; sequence MQSNHDSDASQAGDRPARPALRP.

This sequence belongs to the UPF0502 family.

This chain is UPF0502 protein H16_B1091, found in Cupriavidus necator (strain ATCC 17699 / DSM 428 / KCTC 22496 / NCIMB 10442 / H16 / Stanier 337) (Ralstonia eutropha).